The chain runs to 501 residues: ATP synthase subunit alpha (501 aa).

Residue 169–176 (GDRQTGKT) participates in ATP binding.

Belongs to the ATPase alpha/beta chains family. As to quaternary structure, F-type ATPases have 2 components, CF(1) - the catalytic core - and CF(0) - the membrane proton channel. CF(1) has five subunits: alpha(3), beta(3), gamma(1), delta(1), epsilon(1). CF(0) has three main subunits: a(1), b(2) and c(9-12). The alpha and beta chains form an alternating ring which encloses part of the gamma chain. CF(1) is attached to CF(0) by a central stalk formed by the gamma and epsilon chains, while a peripheral stalk is formed by the delta and b chains.

It is found in the cell membrane. It carries out the reaction ATP + H2O + 4 H(+)(in) = ADP + phosphate + 5 H(+)(out). Produces ATP from ADP in the presence of a proton gradient across the membrane. The alpha chain is a regulatory subunit. This chain is ATP synthase subunit alpha, found in Desulforamulus reducens (strain ATCC BAA-1160 / DSM 100696 / MI-1) (Desulfotomaculum reducens).